A 90-amino-acid chain; its full sequence is DNA/RNA-binding protein Alba (90 aa).

Lys-8 bears the N6-acetyllysine mark.

It belongs to the histone-like Alba family. Acetylated. Acetylation at Lys-8 decreases DNA-binding affinity.

The protein resides in the cytoplasm. It localises to the chromosome. In terms of biological role, binds double-stranded DNA tightly but without sequence specificity. Involved in DNA compaction. The polypeptide is DNA/RNA-binding protein Alba (Nanoarchaeum equitans (strain Kin4-M)).